We begin with the raw amino-acid sequence, 96 residues long: Co-chaperonin GroES (96 aa).

This sequence belongs to the GroES chaperonin family. Heptamer of 7 subunits arranged in a ring. Interacts with the chaperonin GroEL.

It localises to the cytoplasm. In terms of biological role, together with the chaperonin GroEL, plays an essential role in assisting protein folding. The GroEL-GroES system forms a nano-cage that allows encapsulation of the non-native substrate proteins and provides a physical environment optimized to promote and accelerate protein folding. GroES binds to the apical surface of the GroEL ring, thereby capping the opening of the GroEL channel. This Verminephrobacter eiseniae (strain EF01-2) protein is Co-chaperonin GroES.